Reading from the N-terminus, the 864-residue chain is Probable M1 family aminopeptidase 1 (864 aa).

Substrate contacts are provided by residues Glu-149 and 289–293 (GAMEN). His-325 lines the Zn(2+) pocket. Residue Glu-326 is the Proton acceptor of the active site. Zn(2+) contacts are provided by His-329 and Glu-348.

Belongs to the peptidase M1 family. It depends on Zn(2+) as a cofactor.

The polypeptide is Probable M1 family aminopeptidase 1 (Encephalitozoon cuniculi (strain GB-M1) (Microsporidian parasite)).